The following is a 245-amino-acid chain: Lytic switch protein BZLF1 (245 aa).

The segment at 1 to 167 (MMDPNSTSED…RTRKPQQPES (167 aa)) is transactivation. Residues Thr-14 and Thr-159 each carry the phosphothreonine; by host modification. Residues 157–194 (RRTRKPQQPESLEECDSELEIKRYKNRVASRKCRAKFK) carry the Bipartite nuclear localization signal motif. 3 positions are modified to phosphoserine; by host: Ser-167, Ser-173, and Ser-186. In terms of domain architecture, bZIP spans 170–228 (ECDSELEIKRYKNRVASRKCRAKFKQLLQHYREVAAAKSSENDRLRLLLKQMCPSLDVD). The basic motif stretch occupies residues 178–195 (KRYKNRVASRKCRAKFKQ). A leucine-zipper region spans residues 196-228 (LLQHYREVAAAKSSENDRLRLLLKQMCPSLDVD). Residues 229–245 (SIIPRTPDVLHEDLLNF) form an accessory activation domain region.

It belongs to the bZIP family. As to quaternary structure, homodimer. Interacts (via b-ZIP domain) with the DNA polymerase processivity factor BMRF1 (via N-terminus); this interaction may inhibit BZLF1-induced transcription of the BMRF1 promoter. Interacts with human UBN1, CRTC2 and RACK1. Interacts (via N-terminus) with human PAX5 (via N-terminus); this interaction inhibits BZLF1-mediated lytic viral reactivation. Interacts (via leucine-zipper domain) with host CEBPA; this interaction induces G1 host cell cycle arrest. Interacts (via C-terminus) with host TP53BP1 (via C-terminus); this interaction is involved in the activation of the viral lytic cycle. Interacts with host chromatin-remodeling ATPase INO80; this interaction participates to the activation of early lytic viral genes by BZLF1. Interacts with host regulator of chromatin SMARCA5/hSNF2H; this interaction participates to the activation of early lytic viral genes by BZLF1. Interacts with host PLSCR1/Phospholipid scramblase 1; this interaction negatively regulates the transcriptional regulatory activity of BZLF1 by preventing the formation of the BZLF1-CBP complex.

The protein resides in the host nucleus. Functionally, transcription factor that acts as a molecular switch to induce the transition from the latent to the lytic or productive phase of the virus cycle. Mediates the switch from the latent to the lytic cycle of infection in cells containing a highly methylated viral genome. Probably binds to silenced chromatin and recruits host chromatin-remodeling enzymes. Regulates this switch by binding to 2 types of ZEBRA response elements (ZREs): the CpG-free AP-1 like elements (latency) and the methylated CpG-containing elements (lytic replication). Activates preferentially the methylated forms of the viral lytic R (BRLF1) and Na (BRRF1) gene promoters, the latters being the first genes activated during Z-mediated reactivation in latently infected cells. BZLF1 and BRLF1 act together to trigger lytic replication. Also binds the lytic origin of replication, oriLyt. Induces G1 cell cycle arrest by stabilizing the host CCAAT/enhancer binding protein CEBPA. This function is important because the lytic cycle preferentially takes place in host cells arrested in G1. This Epstein-Barr virus (strain B95-8) (HHV-4) protein is Lytic switch protein BZLF1.